A 293-amino-acid chain; its full sequence is Ethanolamine ammonia-lyase small subunit (293 aa).

V207 and E228 together coordinate adenosylcob(III)alamin.

The protein belongs to the EutC family. The basic unit is a heterodimer which dimerizes to form tetramers. The heterotetramers trimerize; 6 large subunits form a core ring with 6 small subunits projecting outwards. Adenosylcob(III)alamin is required as a cofactor.

It localises to the bacterial microcompartment. It carries out the reaction ethanolamine = acetaldehyde + NH4(+). It participates in amine and polyamine degradation; ethanolamine degradation. In terms of biological role, catalyzes the deamination of various vicinal amino-alcohols to oxo compounds. Allows this organism to utilize ethanolamine as the sole source of nitrogen and carbon in the presence of external vitamin B12. In Listeria monocytogenes serotype 4a (strain HCC23), this protein is Ethanolamine ammonia-lyase small subunit.